We begin with the raw amino-acid sequence, 511 residues long: Bifunctional purine biosynthesis protein PurH (511 aa).

The 145-residue stretch at Met-1–Val-145 folds into the MGS-like domain.

It belongs to the PurH family.

It carries out the reaction (6R)-10-formyltetrahydrofolate + 5-amino-1-(5-phospho-beta-D-ribosyl)imidazole-4-carboxamide = 5-formamido-1-(5-phospho-D-ribosyl)imidazole-4-carboxamide + (6S)-5,6,7,8-tetrahydrofolate. It catalyses the reaction IMP + H2O = 5-formamido-1-(5-phospho-D-ribosyl)imidazole-4-carboxamide. It functions in the pathway purine metabolism; IMP biosynthesis via de novo pathway; 5-formamido-1-(5-phospho-D-ribosyl)imidazole-4-carboxamide from 5-amino-1-(5-phospho-D-ribosyl)imidazole-4-carboxamide (10-formyl THF route): step 1/1. Its pathway is purine metabolism; IMP biosynthesis via de novo pathway; IMP from 5-formamido-1-(5-phospho-D-ribosyl)imidazole-4-carboxamide: step 1/1. In Bacillus anthracis (strain A0248), this protein is Bifunctional purine biosynthesis protein PurH.